A 384-amino-acid polypeptide reads, in one-letter code: S-adenosylmethionine synthase (384 aa).

His16 contributes to the ATP binding site. Asp18 is a Mg(2+) binding site. Glu44 is a K(+) binding site. Positions 57 and 100 each coordinate L-methionine. A flexible loop region spans residues 100-110; that stretch reads QSADIAMGVDE. Residues 165 to 167, Asp240, 246 to 247, Ala263, and Lys267 contribute to the ATP site; these read DAK and RK. Asp240 is an L-methionine binding site. An L-methionine-binding site is contributed by Lys271.

Belongs to the AdoMet synthase family. In terms of assembly, homotetramer; dimer of dimers. Mg(2+) serves as cofactor. K(+) is required as a cofactor.

It localises to the cytoplasm. It carries out the reaction L-methionine + ATP + H2O = S-adenosyl-L-methionine + phosphate + diphosphate. The protein operates within amino-acid biosynthesis; S-adenosyl-L-methionine biosynthesis; S-adenosyl-L-methionine from L-methionine: step 1/1. Catalyzes the formation of S-adenosylmethionine (AdoMet) from methionine and ATP. The overall synthetic reaction is composed of two sequential steps, AdoMet formation and the subsequent tripolyphosphate hydrolysis which occurs prior to release of AdoMet from the enzyme. The protein is S-adenosylmethionine synthase of Cellvibrio japonicus (strain Ueda107) (Pseudomonas fluorescens subsp. cellulosa).